We begin with the raw amino-acid sequence, 806 residues long: Phenylalanine--tRNA ligase beta subunit (806 aa).

The region spanning 40–153 (FNSPDYLQLA…ADAIIIDHVS (114 aa)) is the tRNA-binding domain. In terms of domain architecture, B5 spans 413 to 487 (PFSKKLTVNF…KLIDINKLKP (75 aa)). The Mg(2+) site is built by aspartate 465, aspartate 471, glutamate 474, and glutamate 475.

Belongs to the phenylalanyl-tRNA synthetase beta subunit family. Type 1 subfamily. In terms of assembly, tetramer of two alpha and two beta subunits. Requires Mg(2+) as cofactor.

The protein localises to the cytoplasm. The enzyme catalyses tRNA(Phe) + L-phenylalanine + ATP = L-phenylalanyl-tRNA(Phe) + AMP + diphosphate + H(+). This is Phenylalanine--tRNA ligase beta subunit (pheT) from Mycoplasma genitalium (strain ATCC 33530 / DSM 19775 / NCTC 10195 / G37) (Mycoplasmoides genitalium).